The following is a 350-amino-acid chain: MRVAINGFGRIGRLVLQAMAEQKLLGKEFDVAAVVDLSTDARYFAYQLKYDSVQGKMGSSLSAPAEDILEVGGHRIKCVCGRGLKPSQLPWKDLGIEVVIEATGIYANESSYGHLEAGAKRVIISAPAKSSDASKPVKTIVMGVNEHEFDPAEHKVVSNASCTTNCLAPVVHVFLKEGVGIETGLMTTIHSYTATQKTVDGVSLKDWRGGRAAAVNIIPSTTGAAKAVGEVLPSTRGKLTGMAFRVPTPTGSVVDLTFRTEKETSVADLNAMLKKASESYLRGVLQYCDEDIVSADVIHNQYSSIYDSRATLQNNLPNEKRFFKVVSWYDNEWGYSNRVVDLLKFISQKR.

Residues 10–11, aspartate 36, arginine 82, and serine 125 each bind NAD(+); that span reads RI. Residues 161 to 163, threonine 193, 222 to 223, and arginine 245 each bind D-glyceraldehyde 3-phosphate; these read SCT and TG. Cysteine 162 (nucleophile) is an active-site residue. An NAD(+)-binding site is contributed by asparagine 331.

It belongs to the glyceraldehyde-3-phosphate dehydrogenase family. In terms of assembly, homotetramer.

It localises to the cytoplasm. It carries out the reaction D-glyceraldehyde 3-phosphate + phosphate + NAD(+) = (2R)-3-phospho-glyceroyl phosphate + NADH + H(+). Its pathway is carbohydrate degradation; glycolysis; pyruvate from D-glyceraldehyde 3-phosphate: step 1/5. Its function is as follows. Catalyzes the oxidative phosphorylation of glyceraldehyde 3-phosphate (G3P) to 1,3-bisphosphoglycerate (BPG) using the cofactor NAD. The first reaction step involves the formation of a hemiacetal intermediate between G3P and a cysteine residue, and this hemiacetal intermediate is then oxidized to a thioester, with concomitant reduction of NAD to NADH. The reduced NADH is then exchanged with the second NAD, and the thioester is attacked by a nucleophilic inorganic phosphate to produce BPG. In Treponema pallidum (strain Nichols), this protein is Glyceraldehyde-3-phosphate dehydrogenase (gap).